The following is an 856-amino-acid chain: DNA mismatch repair protein MutS (856 aa).

Residue 607–614 (GPNMSGKS) coordinates ATP.

It belongs to the DNA mismatch repair MutS family.

Functionally, this protein is involved in the repair of mismatches in DNA. It is possible that it carries out the mismatch recognition step. This protein has a weak ATPase activity. The protein is DNA mismatch repair protein MutS of Lactobacillus delbrueckii subsp. bulgaricus (strain ATCC 11842 / DSM 20081 / BCRC 10696 / JCM 1002 / NBRC 13953 / NCIMB 11778 / NCTC 12712 / WDCM 00102 / Lb 14).